The primary structure comprises 412 residues: Tyrosine--tRNA ligase (412 aa).

L-tyrosine is bound at residue Tyr-38. The 'HIGH' region motif lies at 43 to 52; the sequence is CTANSLHIGS. L-tyrosine contacts are provided by Tyr-170 and Gln-174. The 'KMSKS' region motif lies at 230–234; that stretch reads KMGKT. Lys-233 contributes to the ATP binding site. One can recognise an S4 RNA-binding domain in the interval 343–409; that stretch reads IPISKLLHMW…CGKKRRLKVV (67 aa).

The protein belongs to the class-I aminoacyl-tRNA synthetase family. TyrS type 1 subfamily. In terms of assembly, homodimer.

It is found in the cytoplasm. The catalysed reaction is tRNA(Tyr) + L-tyrosine + ATP = L-tyrosyl-tRNA(Tyr) + AMP + diphosphate + H(+). Its function is as follows. Catalyzes the attachment of tyrosine to tRNA(Tyr) in a two-step reaction: tyrosine is first activated by ATP to form Tyr-AMP and then transferred to the acceptor end of tRNA(Tyr). This Anaplasma phagocytophilum (strain HZ) protein is Tyrosine--tRNA ligase.